A 675-amino-acid chain; its full sequence is Methionine--tRNA ligase (675 aa).

The short motif at Pro15–His25 is the 'HIGH' region element. Zn(2+)-binding residues include Cys146, Cys149, Cys159, and Cys162. Residues Lys332–Ser336 carry the 'KMSKS' region motif. Lys335 provides a ligand contact to ATP. Residues Asp573 to Lys675 enclose the tRNA-binding domain.

Belongs to the class-I aminoacyl-tRNA synthetase family. MetG type 1 subfamily. Homodimer. The cofactor is Zn(2+).

The protein localises to the cytoplasm. It carries out the reaction tRNA(Met) + L-methionine + ATP = L-methionyl-tRNA(Met) + AMP + diphosphate. Functionally, is required not only for elongation of protein synthesis but also for the initiation of all mRNA translation through initiator tRNA(fMet) aminoacylation. The polypeptide is Methionine--tRNA ligase (Serratia proteamaculans (strain 568)).